Consider the following 383-residue polypeptide: Protein delta homolog 2 (383 aa).

An N-terminal signal peptide occupies residues Met1 to Ala26. 4 consecutive EGF-like domains span residues Asp27–Glu58, Arg62–Asp89, Asp91–Glu129, and Lys131–Glu172. Residues Asp27–Ser306 lie on the Extracellular side of the membrane. 17 cysteine pairs are disulfide-bonded: Cys29–Cys40, Cys33–Cys46, Cys48–Cys57, Cys66–Cys71, Cys79–Cys88, Cys95–Cys107, Cys101–Cys117, Cys119–Cys128, Cys135–Cys148, Cys142–Cys160, Cys162–Cys171, Cys178–Cys189, Cys183–Cys198, Cys200–Cys209, Cys216–Cys227, Cys221–Cys236, and Cys238–Cys247. An N-linked (GlcNAc...) asparagine glycan is attached at Asn157. Residues Asn174–Thr210 enclose the EGF-like 5; calcium-binding domain. Residues Asn212–Glu248 enclose the EGF-like 6; calcium-binding domain. A helical transmembrane segment spans residues Leu307–Leu327. The Cytoplasmic segment spans residues Thr328 to Leu383.

It is found in the membrane. In terms of biological role, regulates adipogenesis. The sequence is that of Protein delta homolog 2 (DLK2) from Homo sapiens (Human).